We begin with the raw amino-acid sequence, 355 residues long: Hyaluronan and proteoglycan link protein 1 (355 aa).

Residues 1 to 9 (MTSLLFLVL) constitute a propeptide that is removed on maturation. Asn-21 and Asn-56 each carry an N-linked (GlcNAc...) asparagine glycan. Residues 38 to 156 (PRLLVVAEQA…EDDTAVVALN (119 aa)) enclose the Ig-like V-type domain. 5 disulfides stabilise this stretch: Cys-61–Cys-140, Cys-182–Cys-253, Cys-206–Cys-227, Cys-280–Cys-350, and Cys-305–Cys-326. 2 Link domains span residues 160–255 (VVFP…FCFT) and 260–352 (GRFY…YCFR).

The protein belongs to the HAPLN family.

Its subcellular location is the secreted. It is found in the extracellular space. The protein localises to the extracellular matrix. In terms of biological role, stabilizes the aggregates of proteoglycan monomers with hyaluronic acid in the extracellular cartilage matrix. This is Hyaluronan and proteoglycan link protein 1 (HAPLN1) from Gallus gallus (Chicken).